The following is a 290-amino-acid chain: 4-hydroxybenzoate octaprenyltransferase (290 aa).

The next 6 helical transmembrane spans lie at 38 to 58, 99 to 119, 141 to 161, 213 to 233, 238 to 258, and 268 to 288; these read LAGM…GVFF, LFGA…SMTI, LPQL…FTAV, LIIG…GWQL, IYYL…KLIV, and AFLN…LSLL.

It belongs to the UbiA prenyltransferase family. Mg(2+) serves as cofactor.

It localises to the cell inner membrane. It carries out the reaction all-trans-octaprenyl diphosphate + 4-hydroxybenzoate = 4-hydroxy-3-(all-trans-octaprenyl)benzoate + diphosphate. The protein operates within cofactor biosynthesis; ubiquinone biosynthesis. In terms of biological role, catalyzes the prenylation of para-hydroxybenzoate (PHB) with an all-trans polyprenyl group. Mediates the second step in the final reaction sequence of ubiquinone-8 (UQ-8) biosynthesis, which is the condensation of the polyisoprenoid side chain with PHB, generating the first membrane-bound Q intermediate 3-octaprenyl-4-hydroxybenzoate. This is 4-hydroxybenzoate octaprenyltransferase from Sodalis glossinidius (strain morsitans).